Here is a 473-residue protein sequence, read N- to C-terminus: MKTDTSTFLAQQIVRLRRRDQIRRLMQRDKTPLAILFMAAVVGTLTGLVGVAFEKAVSWVQNMRIGALVQVADHAFLLWPLAFILSALLAMVGYFLVRKFAPEAGGSGIPEIEGALEELRPVRWWRVLPVKFIGGMGTLGAGMVLGREGPTVQIGGNLGRMVLDVFRMRSAEARHTLLATGAAAGLSAAFNAPLAGILFIIEEMRPQFRYNLISIKAVFTGVIMSSIVFRIFNGEAPIIEVGKLSDAPVNTLWLYLILGIIFGCVGPVFNSLVLRTQDMFQRFHGGEIKKWVLMGGAIGGLCGILGLIEPEAAGGGFNLIPIAAAGNFSVGLLLFIFIARVVTTLLCFSSGAPGGIFAPMLALGTLLGTAFGMAAAVLFPQYHLEAGTFAIAGMGALMAASVRAPLTGIVLVLEMTDNYQLILPMIITCLGATLLAQFLGGKPLYSTILARTLAKQDAEQAAKSQNAPAGENT.

At 1-32 (MKTDTSTFLAQQIVRLRRRDQIRRLMQRDKTP) the chain is on the cytoplasmic side. A helical membrane pass occupies residues 33-69 (LAILFMAAVVGTLTGLVGVAFEKAVSWVQNMRIGALV). Residues 70–76 (QVADHAF) are Periplasmic-facing. Residues 77-100 (LLWPLAFILSALLAMVGYFLVRKF) traverse the membrane as a helical segment. A Selectivity filter part_1 motif is present at residues 106-110 (GSGIP). Serine 107 contacts chloride. An intramembrane region (helical) is located at residues 109-116 (IPEIEGAL). Over 117–123 (EELRPVR) the chain is Cytoplasmic. 2 helical membrane passes run 124 to 141 (WWRV…TLGA) and 148 to 166 (EGPT…LDVF). The Selectivity filter part_2 signature appears at 146–150 (GREGP). Topologically, residues 167-176 (RMRSAEARHT) are cytoplasmic. Intramembrane regions (helical) lie at residues 177-189 (LLAT…LSAA) and 193-201 (PLAGILFII). Residues 202–214 (EEMRPQFRYNLIS) are Cytoplasmic-facing. The chain crosses the membrane as a helical span at residues 215–232 (IKAVFTGVIMSSIVFRIF). Over 233-252 (NGEAPIIEVGKLSDAPVNTL) the chain is Periplasmic. A helical membrane pass occupies residues 253 to 281 (WLYLILGIIFGCVGPVFNSLVLRTQDMFQ). The Cytoplasmic portion of the chain corresponds to 282-287 (RFHGGE). Residues 288–309 (IKKWVLMGGAIGGLCGILGLIE) form a helical membrane-spanning segment. Over 310-329 (PEAAGGGFNLIPIAAAGNFS) the chain is Periplasmic. 2 consecutive transmembrane segments (helical) span residues 330-349 (VGLL…LCFS) and 355-376 (GIFA…MAAA). Residues 355 to 359 (GIFAP) carry the Selectivity filter part_3 motif. 2 residues coordinate chloride: isoleucine 356 and phenylalanine 357. Topologically, residues 377–386 (VLFPQYHLEA) are periplasmic. Residues 387-401 (GTFAIAGMGALMAAS) constitute an intramembrane region (helical). Positions 402 to 404 (VRA) form an intramembrane region, note=Loop between two helices. Residues 405-416 (PLTGIVLVLEMT) constitute an intramembrane region (helical). An intramembrane region (note=Loop between two helices) is located at residues 417 to 421 (DNYQL). A helical membrane pass occupies residues 422 to 438 (ILPMIITCLGATLLAQF). Topologically, residues 439 to 473 (LGGKPLYSTILARTLAKQDAEQAAKSQNAPAGENT) are cytoplasmic. Tyrosine 445 contacts chloride.

This sequence belongs to the chloride channel (TC 2.A.49) family. ClcA subfamily. Homodimer.

The protein localises to the cell inner membrane. The catalysed reaction is 2 chloride(in) + H(+)(out) = 2 chloride(out) + H(+)(in). Functionally, proton-coupled chloride transporter. Functions as antiport system and exchanges two chloride ions for 1 proton. Probably acts as an electrical shunt for an outwardly-directed proton pump that is linked to amino acid decarboxylation, as part of the extreme acid resistance (XAR) response. The chain is H(+)/Cl(-) exchange transporter ClcA from Salmonella gallinarum (strain 287/91 / NCTC 13346).